Here is a 215-residue protein sequence, read N- to C-terminus: UPF0126 membrane protein DR_2368 (215 aa).

6 consecutive transmembrane segments (helical) span residues 15–35, 39–59, 75–95, 101–121, 123–143, and 162–182; these read LHWLDLIGVLAFAMSGALLGV, FDLFGVLVLGAVTAVGGGAIR, TYLWTALLGALLAFAFGERLA, LSLFDSAGLALFATSGALGAI, IGLGPLGVVFAGMLSGVGGGI, and LYATAAAAGAGAVWLLAPHFT.

This sequence belongs to the UPF0126 family.

The protein resides in the cell membrane. This Deinococcus radiodurans (strain ATCC 13939 / DSM 20539 / JCM 16871 / CCUG 27074 / LMG 4051 / NBRC 15346 / NCIMB 9279 / VKM B-1422 / R1) protein is UPF0126 membrane protein DR_2368.